The primary structure comprises 295 residues: Nucleotide-binding protein YjiE (295 aa).

12 to 19 lines the ATP pocket; the sequence is GMSGAGKT. Residue 63–66 coordinates GTP; sequence DMRS.

It belongs to the RapZ-like family.

Displays ATPase and GTPase activities. This Lactococcus lactis subsp. lactis (strain IL1403) (Streptococcus lactis) protein is Nucleotide-binding protein YjiE (yjiE).